Here is a 1299-residue protein sequence, read N- to C-terminus: DExH-box ATP-dependent RNA helicase DExH6 (1299 aa).

One can recognise an R3H domain in the interval 15-82 (PTSVEATRIW…QRRLSIFKSR (68 aa)). The Helicase ATP-binding domain maps to 197–366 (TSAVESNQVI…FGGCPVVRVP (170 aa)). 210 to 217 (GETGCGKT) contacts ATP. The DEIH box signature appears at 313 to 316 (DEIH). The 175-residue stretch at 537–711 (LIQQLMRKIC…ELCLQVKILD (175 aa)) folds into the Helicase C-terminal domain. Disordered regions lie at residues 987 to 1039 (PTGS…MMSS) and 1175 to 1299 (IPRQ…AEQK). Acidic residues predominate over residues 992-1006 (DSDDSNEEEEDDEEV). The span at 1007–1020 (AANTNEEVAANTNE) shows a compositional bias: low complexity. Basic and acidic residues predominate over residues 1023–1032 (MDIHKEESRR). Polar residues-rich tracts occupy residues 1176–1193 (PRQQ…NNTD), 1204–1214 (NPTNRINQPEA), and 1239–1251 (PSDQ…QHNT). A Bipartite nuclear localization signal motif is present at residues 1182-1200 (KQRNPKATNNTDSGKKKEK). Residues 1267 to 1283 (KKTKTRSGNNSDSGKKK) carry the Bipartite nuclear localization signal motif. Residues 1279-1299 (SGKKKEQYIPKRQREDKAEQK) are compositionally biased toward basic and acidic residues.

This sequence belongs to the DExH box helicase family. Specifically expressed in the tapetum and vascular tissues.

It is found in the nucleus. It carries out the reaction ATP + H2O = ADP + phosphate + H(+). Its function is as follows. May function as an ATP-dependent RNA/DNA helicase. This chain is DExH-box ATP-dependent RNA helicase DExH6, found in Arabidopsis thaliana (Mouse-ear cress).